The sequence spans 275 residues: Elongation factor Ts (275 aa).

Residues 76–79 (TDFV) are involved in Mg(2+) ion dislocation from EF-Tu.

This sequence belongs to the EF-Ts family.

It is found in the cytoplasm. Associates with the EF-Tu.GDP complex and induces the exchange of GDP to GTP. It remains bound to the aminoacyl-tRNA.EF-Tu.GTP complex up to the GTP hydrolysis stage on the ribosome. The chain is Elongation factor Ts from Corynebacterium diphtheriae (strain ATCC 700971 / NCTC 13129 / Biotype gravis).